Reading from the N-terminus, the 175-residue chain is Ribosome maturation factor RimM (175 aa).

One can recognise a PRC barrel domain in the interval Glu-97–Leu-169.

The protein belongs to the RimM family. As to quaternary structure, binds ribosomal protein uS19.

It localises to the cytoplasm. In terms of biological role, an accessory protein needed during the final step in the assembly of 30S ribosomal subunit, possibly for assembly of the head region. Essential for efficient processing of 16S rRNA. May be needed both before and after RbfA during the maturation of 16S rRNA. It has affinity for free ribosomal 30S subunits but not for 70S ribosomes. The polypeptide is Ribosome maturation factor RimM (Christiangramia forsetii (strain DSM 17595 / CGMCC 1.15422 / KT0803) (Gramella forsetii)).